A 542-amino-acid polypeptide reads, in one-letter code: CTP synthase (542 aa).

The tract at residues 1 to 266 (MATNYIFVTG…DDFICQRFHL (266 aa)) is amidoligase domain. Residue Ser-14 participates in CTP binding. Residue Ser-14 coordinates UTP. ATP contacts are provided by residues 15–20 (SLGKGI) and Asp-72. Mg(2+)-binding residues include Asp-72 and Glu-140. Residues 147-149 (DIE), 187-192 (KTKPTQ), and Lys-223 contribute to the CTP site. Residues 187–192 (KTKPTQ) and Lys-223 contribute to the UTP site. 239–241 (KDV) is a binding site for ATP. Positions 291–542 (VIGMVGKYTE…VKAAKDNQKK (252 aa)) constitute a Glutamine amidotransferase type-1 domain. Gly-352 contributes to the L-glutamine binding site. Cys-379 acts as the Nucleophile; for glutamine hydrolysis in catalysis. L-glutamine is bound by residues 380–383 (LGMQ), Glu-403, and Arg-470. Catalysis depends on residues His-515 and Glu-517.

Belongs to the CTP synthase family. Homotetramer.

The enzyme catalyses UTP + L-glutamine + ATP + H2O = CTP + L-glutamate + ADP + phosphate + 2 H(+). It catalyses the reaction L-glutamine + H2O = L-glutamate + NH4(+). It carries out the reaction UTP + NH4(+) + ATP = CTP + ADP + phosphate + 2 H(+). The protein operates within pyrimidine metabolism; CTP biosynthesis via de novo pathway; CTP from UDP: step 2/2. Its activity is regulated as follows. Allosterically activated by GTP, when glutamine is the substrate; GTP has no effect on the reaction when ammonia is the substrate. The allosteric effector GTP functions by stabilizing the protein conformation that binds the tetrahedral intermediate(s) formed during glutamine hydrolysis. Inhibited by the product CTP, via allosteric rather than competitive inhibition. Catalyzes the ATP-dependent amination of UTP to CTP with either L-glutamine or ammonia as the source of nitrogen. Regulates intracellular CTP levels through interactions with the four ribonucleotide triphosphates. In Pasteurella multocida (strain Pm70), this protein is CTP synthase.